The primary structure comprises 276 residues: Undecaprenyl-diphosphatase (276 aa).

A run of 8 helical transmembrane segments spans residues 6–26 (IEILKVIFLGIVEGITEWLPI), 49–69 (EMFFVVIQLGAILAVVVMFWN), 89–109 (FSLWFKVAVACVPSAIMGILF), 117–137 (LHTPVVIAIMLILYGVLFIVI), 151–171 (LADISYKTALMIGVFQVLSLI), 181–201 (IIGALLIGVSRVAAAEFTFFL), 224–244 (AELLTLVIGMAVAFAVSVFVI), and 256–276 (FKVFGWYRIVLGILVLLITAI).

It belongs to the UppP family.

It localises to the cell membrane. It catalyses the reaction di-trans,octa-cis-undecaprenyl diphosphate + H2O = di-trans,octa-cis-undecaprenyl phosphate + phosphate + H(+). Catalyzes the dephosphorylation of undecaprenyl diphosphate (UPP). Confers resistance to bacitracin. The chain is Undecaprenyl-diphosphatase from Enterococcus faecalis (Streptococcus faecalis).